Consider the following 427-residue polypeptide: MTAIVDIIGREILDSRGNPTVEVDVVLEDGAVGRAAVPSGASTGAHEAVELRDGDKGRYGGKGVQKAVEAINGELFDALGGMDAESQVQIDEVMIALDGTPNKARLGANAILGISLAVAKAAAESYDMPLYRYVGGTSARMLPVPMMNIINGGMHADNPIDFQEFMIMPVGADSFSEALRCGAEIFHTLKSELKKAGHNTNVGDEGGFAPNLPSADAALDFVMAAITKAGYKPGEDVMLALDCAATEFFKDGAYVYGGENKTRSVSEQAKYLADLAARYPIVSIEDGMSEDDMDGWKELTDIVGSKCQLVGDDLFVTNVTRLADGIKNGRANSILIKVNQIGTLTETLAAVEMAHKAGYTAVMSHRSGETEDSTIADLAVATNCGQIKTGSLARADRTSKYNQLLRIEQELGSQALYAGKAALKALR.

Q163 serves as a coordination point for (2R)-2-phosphoglycerate. The active-site Proton donor is E205. Residues D242, E285, and D312 each contribute to the Mg(2+) site. The (2R)-2-phosphoglycerate site is built by K337, R366, S367, and K388. The active-site Proton acceptor is the K337.

This sequence belongs to the enolase family. It depends on Mg(2+) as a cofactor.

Its subcellular location is the cytoplasm. It localises to the secreted. It is found in the cell surface. It catalyses the reaction (2R)-2-phosphoglycerate = phosphoenolpyruvate + H2O. The protein operates within carbohydrate degradation; glycolysis; pyruvate from D-glyceraldehyde 3-phosphate: step 4/5. Functionally, catalyzes the reversible conversion of 2-phosphoglycerate (2-PG) into phosphoenolpyruvate (PEP). It is essential for the degradation of carbohydrates via glycolysis. This is Enolase from Rhodopseudomonas palustris (strain BisA53).